The following is a 73-amino-acid chain: MENKFFAAFFLLLVLFSSQEIIGGEGRTCQSKSHHFKYMCTSNHNCAIVCRNEGFSGGRCHGFHRRCYCTRLC.

The signal sequence occupies residues 1 to 26; it reads MENKFFAAFFLLLVLFSSQEIIGGEG. 4 disulfide bridges follow: cysteine 29–cysteine 73, cysteine 40–cysteine 60, cysteine 46–cysteine 67, and cysteine 50–cysteine 69.

This sequence belongs to the DEFL family.

The protein resides in the secreted. In terms of biological role, confers broad-spectrum resistance to pathogens. The polypeptide is Defensin-like protein 6 (PDF2.5) (Arabidopsis thaliana (Mouse-ear cress)).